A 274-amino-acid polypeptide reads, in one-letter code: 4-diphosphocytidyl-2-C-methyl-D-erythritol kinase (274 aa).

Lys8 is a catalytic residue. 92–102 (PSGAGLGGGSS) contributes to the ATP binding site. The active site involves Asp134.

This sequence belongs to the GHMP kinase family. IspE subfamily.

The catalysed reaction is 4-CDP-2-C-methyl-D-erythritol + ATP = 4-CDP-2-C-methyl-D-erythritol 2-phosphate + ADP + H(+). The protein operates within isoprenoid biosynthesis; isopentenyl diphosphate biosynthesis via DXP pathway; isopentenyl diphosphate from 1-deoxy-D-xylulose 5-phosphate: step 3/6. Catalyzes the phosphorylation of the position 2 hydroxy group of 4-diphosphocytidyl-2C-methyl-D-erythritol. The polypeptide is 4-diphosphocytidyl-2-C-methyl-D-erythritol kinase (Porphyromonas gingivalis (strain ATCC 33277 / DSM 20709 / CIP 103683 / JCM 12257 / NCTC 11834 / 2561)).